Here is a 397-residue protein sequence, read N- to C-terminus: Succinate--CoA ligase [ADP-forming] subunit beta (397 aa).

One can recognise an ATP-grasp domain in the interval 9–254; the sequence is KALLRSYGAP…ETEEDPKELA (246 aa). Residues lysine 46, 53 to 55, glutamate 109, serine 112, and glutamate 117 contribute to the ATP site; that span reads GRG. Mg(2+) contacts are provided by asparagine 209 and aspartate 223. Substrate contacts are provided by residues asparagine 274 and 331-333; that span reads GIM.

It belongs to the succinate/malate CoA ligase beta subunit family. In terms of assembly, heterotetramer of two alpha and two beta subunits. Mg(2+) serves as cofactor.

The enzyme catalyses succinate + ATP + CoA = succinyl-CoA + ADP + phosphate. It carries out the reaction GTP + succinate + CoA = succinyl-CoA + GDP + phosphate. It participates in carbohydrate metabolism; tricarboxylic acid cycle; succinate from succinyl-CoA (ligase route): step 1/1. Succinyl-CoA synthetase functions in the citric acid cycle (TCA), coupling the hydrolysis of succinyl-CoA to the synthesis of either ATP or GTP and thus represents the only step of substrate-level phosphorylation in the TCA. The beta subunit provides nucleotide specificity of the enzyme and binds the substrate succinate, while the binding sites for coenzyme A and phosphate are found in the alpha subunit. The protein is Succinate--CoA ligase [ADP-forming] subunit beta of Cereibacter sphaeroides (strain ATCC 17029 / ATH 2.4.9) (Rhodobacter sphaeroides).